A 489-amino-acid chain; its full sequence is Long chain base biosynthesis protein 2d (489 aa).

Residues 4 to 24 form a helical membrane-spanning segment; sequence LPYVTALTTLFSYGLLFAFGQ. Position 311 is an N6-(pyridoxal phosphate)lysine (Lys-311).

The protein belongs to the class-II pyridoxal-phosphate-dependent aminotransferase family. In terms of assembly, heterodimer with LCB1. Component of the serine palmitoyltransferase (SPT) complex, composed of LCB1 and LCB2. It depends on pyridoxal 5'-phosphate as a cofactor.

Its subcellular location is the endoplasmic reticulum membrane. It carries out the reaction L-serine + hexadecanoyl-CoA + H(+) = 3-oxosphinganine + CO2 + CoA. It participates in lipid metabolism; sphingolipid metabolism. Serine palmitoyltransferase (SPT). The heterodimer formed with LCB1 constitutes the catalytic core. In Oryza sativa subsp. japonica (Rice), this protein is Long chain base biosynthesis protein 2d.